The primary structure comprises 78 residues: Mitochondrial import inner membrane translocase subunit Tim9 (78 aa).

The short motif at cysteine 24 to cysteine 48 is the Twin CX3C motif element. 2 disulfides stabilise this stretch: cysteine 24/cysteine 48 and cysteine 28/cysteine 44.

Belongs to the small Tim family. In terms of assembly, heterohexamer; composed of 3 copies of tim-9/tin-9.1 and 3 copies of tim-10/tin-10, named soluble 70 kDa complex. The complex associates with the tim-22 component of the TIM22 complex. Interacts with multi-pass transmembrane proteins in transit.

The protein resides in the mitochondrion inner membrane. Its function is as follows. Mitochondrial intermembrane chaperone that participates in the import and insertion of multi-pass transmembrane proteins into the mitochondrial inner membrane. May also be required for the transfer of beta-barrel precursors from the TOM complex to the sorting and assembly machinery (SAM complex) of the outer membrane. Acts as a chaperone-like protein that protects the hydrophobic precursors from aggregation and guide them through the mitochondrial intermembrane space. In Caenorhabditis briggsae, this protein is Mitochondrial import inner membrane translocase subunit Tim9 (tin-9.1).